The primary structure comprises 96 residues: Putative translation initiation factor IF-1, chloroplastic (96 aa).

Residues 18 to 57 enclose the S1-like domain; it reads INYVSGKIRHSFIRILPGDRVKIEVSPYDSTKGRIIYRLH.

This sequence belongs to the IF-1 family. In terms of assembly, component of the 30S ribosomal translation pre-initiation complex which assembles on the 30S ribosome in the order IF-2 and IF-3, IF-1 and N-formylmethionyl-tRNA(fMet); mRNA recruitment can occur at any time during PIC assembly.

Its subcellular location is the plastid. It localises to the chloroplast. One of the essential components for the initiation of protein synthesis. Stabilizes the binding of IF-2 and IF-3 on the 30S subunit to which N-formylmethionyl-tRNA(fMet) subsequently binds. Helps modulate mRNA selection, yielding the 30S pre-initiation complex (PIC). Upon addition of the 50S ribosomal subunit IF-1, IF-2 and IF-3 are released leaving the mature 70S translation initiation complex. The sequence is that of Putative translation initiation factor IF-1, chloroplastic (infA) from Nicotiana tabacum (Common tobacco).